Consider the following 199-residue polypeptide: Acireductone dioxygenase 1 (199 aa).

Positions 99, 101, 105, and 144 each coordinate Fe(2+). Ni(2+) is bound by residues His-99, His-101, Glu-105, and His-144.

The protein belongs to the acireductone dioxygenase (ARD) family. It depends on Fe(2+) as a cofactor. The cofactor is Ni(2+).

The protein localises to the cytoplasm. Its subcellular location is the nucleus. It catalyses the reaction 1,2-dihydroxy-5-(methylsulfanyl)pent-1-en-3-one + O2 = 4-methylsulfanyl-2-oxobutanoate + formate + 2 H(+). It carries out the reaction 1,2-dihydroxy-5-(methylsulfanyl)pent-1-en-3-one + O2 = 3-(methylsulfanyl)propanoate + CO + formate + 2 H(+). Its pathway is amino-acid biosynthesis; L-methionine biosynthesis via salvage pathway; L-methionine from S-methyl-5-thio-alpha-D-ribose 1-phosphate: step 5/6. Functionally, catalyzes 2 different reactions between oxygen and the acireductone 1,2-dihydroxy-3-keto-5-methylthiopentene (DHK-MTPene) depending upon the metal bound in the active site. Fe-containing acireductone dioxygenase (Fe-ARD) produces formate and 2-keto-4-methylthiobutyrate (KMTB), the alpha-ketoacid precursor of methionine in the methionine recycle pathway. Ni-containing acireductone dioxygenase (Ni-ARD) produces methylthiopropionate, carbon monoxide and formate, and does not lie on the methionine recycle pathway. The protein is Acireductone dioxygenase 1 (ARD1) of Oryza sativa subsp. indica (Rice).